Consider the following 399-residue polypeptide: Acetate kinase (399 aa).

N10 contributes to the Mg(2+) binding site. K17 lines the ATP pocket. Residue R91 coordinates substrate. D150 functions as the Proton donor/acceptor in the catalytic mechanism. ATP-binding positions include 210–214 (HLGNG), 285–287 (DFR), and 333–337 (GIGEN). E387 is a binding site for Mg(2+).

This sequence belongs to the acetokinase family. In terms of assembly, homodimer. It depends on Mg(2+) as a cofactor. Mn(2+) serves as cofactor.

Its subcellular location is the cytoplasm. It catalyses the reaction acetate + ATP = acetyl phosphate + ADP. Its pathway is metabolic intermediate biosynthesis; acetyl-CoA biosynthesis; acetyl-CoA from acetate: step 1/2. Its function is as follows. Catalyzes the formation of acetyl phosphate from acetate and ATP. Can also catalyze the reverse reaction. The sequence is that of Acetate kinase from Wigglesworthia glossinidia brevipalpis.